Here is a 348-residue protein sequence, read N- to C-terminus: CCN family member 2 (348 aa).

Residues 1-25 form the signal peptide; sequence MLASVAGPISLALVLLALCTRPAMG. The region spanning 26-97 is the IGFBP N-terminal domain; it reads QDCSAQCQCA…NRKIGVCTAK (72 aa). 6 disulfides stabilise this stretch: Cys-28/Cys-53, Cys-32/Cys-55, Cys-34/Cys-56, Cys-42/Cys-59, Cys-67/Cys-81, and Cys-73/Cys-94. Residues 100–166 form the VWFC domain; it reads APCVFGGSVY…GKCCEEWVCD (67 aa). Residues 197–242 enclose the TSP type-1 domain; sequence NCLVQTTEWSACSKTCGMGISTRVTNDNTFCRLEKQSRLCMVRPCE. Residues 246–348 are heparin-binding; that stretch reads EENIKKGKKC…YYRKMYGDMA (103 aa). 5 disulfides stabilise this stretch: Cys-255–Cys-292, Cys-272–Cys-306, Cys-283–Cys-322, Cys-286–Cys-324, and Cys-291–Cys-328. A CTCK domain is found at 255 to 329; it reads CIRTPKIAKP…KTCACHYNCP (75 aa).

It belongs to the CCN family. In terms of assembly, monomer. Interacts with TSKU. As to expression, testis, spleen, kidney, lung, heart, and brain (lowest level in testis and highest in lung).

The protein localises to the secreted. The protein resides in the extracellular space. Its subcellular location is the extracellular matrix. Its function is as follows. Major connective tissue mitoattractant secreted by vascular endothelial cells. Promotes proliferation and differentiation of chondrocytes. Is involved in the stimulation of osteoblast differentiation and has a critical role in osteogenesis. Mediates heparin- and divalent cation-dependent cell adhesion in many cell types including fibroblasts, myofibroblasts, endothelial and epithelial cells. Enhances fibroblast growth factor-induced DNA synthesis. This chain is CCN family member 2, found in Mus musculus (Mouse).